Reading from the N-terminus, the 410-residue chain is 3-phosphoshikimate 1-carboxyvinyltransferase (410 aa).

3-phosphoshikimate is bound by residues lysine 20, serine 21, and arginine 25. Lysine 20 contacts phosphoenolpyruvate. Arginine 115 serves as a coordination point for phosphoenolpyruvate. Residues serine 157, serine 158, glutamine 159, serine 183, aspartate 293, and lysine 320 each contribute to the 3-phosphoshikimate site. Residue glutamine 159 participates in phosphoenolpyruvate binding. Aspartate 293 functions as the Proton acceptor in the catalytic mechanism. Arginine 324, arginine 365, and lysine 391 together coordinate phosphoenolpyruvate.

Belongs to the EPSP synthase family. In terms of assembly, monomer.

The protein localises to the cytoplasm. The catalysed reaction is 3-phosphoshikimate + phosphoenolpyruvate = 5-O-(1-carboxyvinyl)-3-phosphoshikimate + phosphate. Its pathway is metabolic intermediate biosynthesis; chorismate biosynthesis. In terms of biological role, catalyzes the transfer of the enolpyruvyl moiety of phosphoenolpyruvate (PEP) to the 5-hydroxyl of shikimate-3-phosphate (S3P) to produce enolpyruvyl shikimate-3-phosphate and inorganic phosphate. The polypeptide is 3-phosphoshikimate 1-carboxyvinyltransferase (Thermoplasma acidophilum (strain ATCC 25905 / DSM 1728 / JCM 9062 / NBRC 15155 / AMRC-C165)).